Reading from the N-terminus, the 1031-residue chain is Serine-repeat antigen protein 6 (1031 aa).

Positions 1–24 (MICPIFFLYIINVLFTQYFIKCEG) are cleaved as a signal peptide. N74 is a glycosylation site (N-linked (GlcNAc...) asparagine). Residues 91–101 (KVVSSSESGKG) are compositionally biased toward low complexity. The disordered stretch occupies residues 91–163 (KVVSSSESGK…TESSSETLNK (73 aa)). Polar residues predominate over residues 104–139 (VSHTKVTSEGLSDTQPNVTQSVSSSTHTPGSLDSTM). N120 is a glycosylation site (N-linked (GlcNAc...) asparagine). Residues 140-158 (STEQHSSVSQSSLPTESSS) show a composition bias toward low complexity. An N-linked (GlcNAc...) asparagine glycan is attached at N449. The interval 490–567 (TLPSESPSES…GDTNYVYDFD (78 aa)) is disordered. Positions 492–505 (PSESPSESSSKSDS) are enriched in low complexity. Residues 511–535 (NDKDKNEDKDDMSKNSKEEFKNDDK) are compositionally biased toward basic and acidic residues. A glycan (N-linked (GlcNAc...) asparagine) is linked at N544. Residues 554–564 (NINNGDTNYVY) show a composition bias toward low complexity. A glycan (N-linked (GlcNAc...) asparagine) is linked at N573. C644 is an active-site residue. A glycan (N-linked (GlcNAc...) asparagine) is linked at N674. Residues H810 and N835 contribute to the active site. 2 N-linked (GlcNAc...) asparagine glycosylation sites follow: N929 and N974.

It belongs to the peptidase C1 family. In terms of processing, just prior to merozoite egress from host erythrocytes, proteolytically cleaved by SUB1 to generate the active 75kDa form.

It is found in the parasitophorous vacuole lumen. The protein localises to the parasitophorous vacuole membrane. In terms of biological role, cysteine protease which plays an essential role in merozoite egress from host erythrocytes. May cleave host SPTB/beta spectrin and ANK1/ankyrin-1 which disrupts host erythrocyte actin cytoskeleton and leads to host erythrocyte cell membrane rupture. In Plasmodium falciparum (isolate 3D7), this protein is Serine-repeat antigen protein 6.